The sequence spans 338 residues: Ferrochelatase (338 aa).

Residues His-210 and Glu-291 each contribute to the Fe cation site.

It belongs to the ferrochelatase family.

It is found in the cytoplasm. It catalyses the reaction heme b + 2 H(+) = protoporphyrin IX + Fe(2+). Its pathway is porphyrin-containing compound metabolism; protoheme biosynthesis; protoheme from protoporphyrin-IX: step 1/1. Catalyzes the ferrous insertion into protoporphyrin IX. The sequence is that of Ferrochelatase from Helicobacter acinonychis (strain Sheeba).